The following is a 112-amino-acid chain: Large ribosomal subunit protein uL22 (112 aa).

The protein belongs to the universal ribosomal protein uL22 family. Part of the 50S ribosomal subunit.

Its function is as follows. This protein binds specifically to 23S rRNA; its binding is stimulated by other ribosomal proteins, e.g. L4, L17, and L20. It is important during the early stages of 50S assembly. It makes multiple contacts with different domains of the 23S rRNA in the assembled 50S subunit and ribosome. In terms of biological role, the globular domain of the protein is located near the polypeptide exit tunnel on the outside of the subunit, while an extended beta-hairpin is found that lines the wall of the exit tunnel in the center of the 70S ribosome. In Legionella pneumophila subsp. pneumophila (strain Philadelphia 1 / ATCC 33152 / DSM 7513), this protein is Large ribosomal subunit protein uL22.